The following is a 339-amino-acid chain: 2-keto-3-deoxygluconate permease (339 aa).

Transmembrane regions (helical) follow at residues 10 to 30 (IPGG…TFAP), 42 to 62 (GLIS…GASI), 77 to 97 (LVVT…RILP), 100 to 120 (GVEV…AMDM), 141 to 161 (AFVL…LGTA), 163 to 183 (IASF…VGFA), 199 to 219 (VQTL…LSVI), 224 to 244 (LLGV…LIVA), 254 to 274 (TAGI…VLIA), and 289 to 309 (TLVA…TAMW). The disordered stretch occupies residues 315–339 (GGDGTVPKEDAVEEKAEQQRRRIIK). The segment covering 320 to 339 (VPKEDAVEEKAEQQRRRIIK) has biased composition (basic and acidic residues).

This sequence belongs to the KdgT transporter family.

The protein localises to the cell inner membrane. It catalyses the reaction 2-dehydro-3-deoxy-D-gluconate(in) + H(+)(in) = 2-dehydro-3-deoxy-D-gluconate(out) + H(+)(out). Uptake is inhibited by the protonophore uncouplers carbonyl cyanide m-chlorophenylhydrazone (CCCP) and 2,4-dinitrophenol, and by NaN(3). Its function is as follows. Catalyzes the proton-dependent uptake of 2-keto-3-deoxygluconate (KDG) into the cell. Can also mediate the uptake of glucuronate with a low affinity, and may mediate the uptake of 5-keto-4-deoxyuronate (DKI) and 2,5-diketo-3-deoxygluconate (DKII), which are intermediates in pectin degradation. In Dickeya chrysanthemi (Pectobacterium chrysanthemi), this protein is 2-keto-3-deoxygluconate permease.